Here is a 593-residue protein sequence, read N- to C-terminus: NADH-quinone oxidoreductase subunit C/D (593 aa).

Residues 1–184 (MTADNALYIP…DPYSLTLAKQ (184 aa)) are NADH dehydrogenase I subunit C. Residues 208 to 593 (DYMFLNLGPN…IDFVMADVDR (386 aa)) are NADH dehydrogenase I subunit D.

In the N-terminal section; belongs to the complex I 30 kDa subunit family. The protein in the C-terminal section; belongs to the complex I 49 kDa subunit family. In terms of assembly, NDH-1 is composed of 13 different subunits. Subunits NuoB, CD, E, F, and G constitute the peripheral sector of the complex.

The protein resides in the cell inner membrane. It catalyses the reaction a quinone + NADH + 5 H(+)(in) = a quinol + NAD(+) + 4 H(+)(out). Its function is as follows. NDH-1 shuttles electrons from NADH, via FMN and iron-sulfur (Fe-S) centers, to quinones in the respiratory chain. The immediate electron acceptor for the enzyme in this species is believed to be ubiquinone. Couples the redox reaction to proton translocation (for every two electrons transferred, four hydrogen ions are translocated across the cytoplasmic membrane), and thus conserves the redox energy in a proton gradient. This is NADH-quinone oxidoreductase subunit C/D from Pseudomonas syringae pv. tomato (strain ATCC BAA-871 / DC3000).